Reading from the N-terminus, the 580-residue chain is Acyl-coenzyme A synthetase ACSM4, mitochondrial (580 aa).

A mitochondrion-targeting transit peptide spans 1–22; the sequence is MKIFFRYQTFRFIWLTKPPGRR. ATP-binding positions include 229–237, 368–373, D455, R470, and K566; these read TSGTTGFPK and EGYGQT.

The protein belongs to the ATP-dependent AMP-binding enzyme family. Requires Mg(2+) as cofactor. The cofactor is Mn(2+).

The protein localises to the mitochondrion. It catalyses the reaction a medium-chain fatty acid + ATP + CoA = a medium-chain fatty acyl-CoA + AMP + diphosphate. It carries out the reaction hexanoate + ATP + CoA = hexanoyl-CoA + AMP + diphosphate. The catalysed reaction is octanoate + ATP + CoA = octanoyl-CoA + AMP + diphosphate. The enzyme catalyses decanoate + ATP + CoA = decanoyl-CoA + AMP + diphosphate. It catalyses the reaction dodecanoate + ATP + CoA = dodecanoyl-CoA + AMP + diphosphate. In terms of biological role, catalyzes the activation of fatty acids by CoA to produce an acyl-CoA, the first step in fatty acid metabolism. Capable of activating medium-chain fatty acids with a preference for C6-12 fatty acids. The polypeptide is Acyl-coenzyme A synthetase ACSM4, mitochondrial (ACSM4) (Homo sapiens (Human)).